Consider the following 690-residue polypeptide: Eukaryotic translation initiation factor 3 subunit B (690 aa).

Residues 1-11 (MAKKKSEEHSG) show a composition bias toward basic and acidic residues. Residues 1–33 (MAKKKSEEHSGADANDSDYNEEPNFDDPPGYVD) form a disordered region. The segment covering 15 to 25 (NDSDYNEEPNF) has biased composition (acidic residues). The RRM domain maps to 57-141 (SVVVVDNMPK…YTFAVNLFTD (85 aa)). WD repeat units follow at residues 207 to 246 (TRER…KIQK), 292 to 331 (GDGM…LLDL), 334 to 369 (IKIA…TLME), 442 to 484 (EIRE…KPSL), and 530 to 575 (PDHF…IRRT). Residues 613–646 (EQKDRLRLTRASKELLEKRAQLRETFMEYRNKRI) are a coiled coil.

Belongs to the eIF-3 subunit B family. As to quaternary structure, component of the eukaryotic translation initiation factor 3 (eIF-3) complex. The eIF-3 complex interacts with pix. Interacts with mxt.

It localises to the cytoplasm. Functionally, RNA-binding component of the eukaryotic translation initiation factor 3 (eIF-3) complex, which is involved in protein synthesis of a specialized repertoire of mRNAs and, together with other initiation factors, stimulates binding of mRNA and methionyl-tRNAi to the 40S ribosome. The eIF-3 complex specifically targets and initiates translation of a subset of mRNAs involved in cell proliferation. The sequence is that of Eukaryotic translation initiation factor 3 subunit B from Drosophila mojavensis (Fruit fly).